The primary structure comprises 534 residues: Phosphoenolpyruvate carboxykinase (ATP) (534 aa).

The substrate site is built by R59, Y200, and K206. ATP-binding positions include K206, H225, and 242 to 250 (GLSGTGKTT). Residues K206 and H225 each coordinate Mn(2+). Residue D263 participates in Mn(2+) binding. ATP contacts are provided by residues E291, R327, 443-444 (RI), and T449. R327 is a substrate binding site.

Belongs to the phosphoenolpyruvate carboxykinase (ATP) family. Requires Mn(2+) as cofactor.

It localises to the cytoplasm. The enzyme catalyses oxaloacetate + ATP = phosphoenolpyruvate + ADP + CO2. It functions in the pathway carbohydrate biosynthesis; gluconeogenesis. Its function is as follows. Involved in the gluconeogenesis. Catalyzes the conversion of oxaloacetate (OAA) to phosphoenolpyruvate (PEP) through direct phosphoryl transfer between the nucleoside triphosphate and OAA. In Lachnospira eligens (strain ATCC 27750 / DSM 3376 / VPI C15-48 / C15-B4) (Eubacterium eligens), this protein is Phosphoenolpyruvate carboxykinase (ATP).